Consider the following 173-residue polypeptide: RNA polymerase sigma factor TcsR (173 aa).

Residues 122 to 169 (IKDLTQNEKNILRKIYLHGLRESEISRELNISRQAVNKTHLRALEKLK) form a sigma-70 factor domain-4 region. Positions 143 to 162 (ESEISRELNISRQAVNKTHL) form a DNA-binding region, H-T-H motif.

It belongs to the sigma-70 factor family.

Its function is as follows. Sigma factors are initiation factors that promote the attachment of RNA polymerase to specific initiation sites and are then released. Transcriptional regulator specifically required to activate expression of the toxin gene locus, composed of tcsL and tcdE/utxA. In Paraclostridium sordellii (Clostridium sordellii), this protein is RNA polymerase sigma factor TcsR.